Reading from the N-terminus, the 576-residue chain is RNA-binding post-transcriptional regulator cip2 (576 aa).

An RRM domain is found at 232 to 310; the sequence is TAIVIKNIPF…RRLRVEWKRQ (79 aa). An R3H domain is found at 355 to 420; that stretch reads DPAILNVYSH…AKQVVITMPS (66 aa).

In terms of assembly, interacts with csx1. Phosphorylated by sty1.

It localises to the cytoplasm. Regulates global gene expression after oxidative stress. Interacts and stabilizes mRNAs and may regulate their transition between different cytoplasmic components after oxidative stress. The polypeptide is RNA-binding post-transcriptional regulator cip2 (cip2) (Schizosaccharomyces pombe (strain 972 / ATCC 24843) (Fission yeast)).